The following is a 223-amino-acid chain: Cytidylate kinase (223 aa).

Residue 11 to 19 (GPAGVGKST) participates in ATP binding.

This sequence belongs to the cytidylate kinase family. Type 1 subfamily.

It is found in the cytoplasm. It catalyses the reaction CMP + ATP = CDP + ADP. It carries out the reaction dCMP + ATP = dCDP + ADP. In Maridesulfovibrio salexigens (strain ATCC 14822 / DSM 2638 / NCIMB 8403 / VKM B-1763) (Desulfovibrio salexigens), this protein is Cytidylate kinase.